A 190-amino-acid polypeptide reads, in one-letter code: HTH-type transcriptional repressor AcnR (190 aa).

In terms of domain architecture, HTH tetR-type spans 10 to 70; the sequence is SMRRQEILEG…ALAREDAARM (61 aa). A DNA-binding region (H-T-H motif) is located at residues 33-52; sequence TVRRLEETVGKSRGAIFHHF. Citrate-binding positions include 79–80, arginine 130, and asparagine 134; that span reads LV. Glutamate 181 is a binding site for Mg(2+). Arginine 185 contributes to the citrate binding site.

As to quaternary structure, homodimer.

Functionally, acnR negatively controls the expression of the aconitase gene acn. The chain is HTH-type transcriptional repressor AcnR from Corynebacterium diphtheriae (strain ATCC 700971 / NCTC 13129 / Biotype gravis).